Reading from the N-terminus, the 201-residue chain is MSSSLTPAIDQLVRCLRYLPGVGAKTATRMALNLLERDQGRAADLAIAISDALTRVKRCSRCQNFCEAELCSICESPKRDDRVLCVVESPTDVLAIEQTSDYSGRYFVLMGHLSPIDGIGPEDIGVDKLKQLLQESAVSELILATNPTVEGEATAHFIAHIAKDLNIPVSRIAHGIPLGGELGMIDSGTLSHALQGRKPFA.

Residues 59–74 form a C4-type zinc finger; sequence CSRCQNFCEAELCSIC. One can recognise a Toprim domain in the interval 82 to 177; sequence RVLCVVESPT…PVSRIAHGIP (96 aa).

It belongs to the RecR family.

Functionally, may play a role in DNA repair. It seems to be involved in an RecBC-independent recombinational process of DNA repair. It may act with RecF and RecO. This is Recombination protein RecR from Hahella chejuensis (strain KCTC 2396).